The following is a 629-amino-acid chain: tRNA uridine 5-carboxymethylaminomethyl modification enzyme MnmG (629 aa).

Residues 13-18, valine 125, and serine 180 each bind FAD; that span reads GGGHAG. 273 to 287 is an NAD(+) binding site; that stretch reads GPRYCPSIEDKVMRF. Glutamine 370 serves as a coordination point for FAD.

It belongs to the MnmG family. Homodimer. Heterotetramer of two MnmE and two MnmG subunits. The cofactor is FAD.

It is found in the cytoplasm. In terms of biological role, NAD-binding protein involved in the addition of a carboxymethylaminomethyl (cmnm) group at the wobble position (U34) of certain tRNAs, forming tRNA-cmnm(5)s(2)U34. The chain is tRNA uridine 5-carboxymethylaminomethyl modification enzyme MnmG from Escherichia coli (strain SMS-3-5 / SECEC).